A 253-amino-acid polypeptide reads, in one-letter code: Imidazole glycerol phosphate synthase subunit HisF (253 aa).

Catalysis depends on residues Asp11 and Asp130.

This sequence belongs to the HisA/HisF family. As to quaternary structure, heterodimer of HisH and HisF.

It localises to the cytoplasm. It carries out the reaction 5-[(5-phospho-1-deoxy-D-ribulos-1-ylimino)methylamino]-1-(5-phospho-beta-D-ribosyl)imidazole-4-carboxamide + L-glutamine = D-erythro-1-(imidazol-4-yl)glycerol 3-phosphate + 5-amino-1-(5-phospho-beta-D-ribosyl)imidazole-4-carboxamide + L-glutamate + H(+). The protein operates within amino-acid biosynthesis; L-histidine biosynthesis; L-histidine from 5-phospho-alpha-D-ribose 1-diphosphate: step 5/9. IGPS catalyzes the conversion of PRFAR and glutamine to IGP, AICAR and glutamate. The HisF subunit catalyzes the cyclization activity that produces IGP and AICAR from PRFAR using the ammonia provided by the HisH subunit. This Gluconobacter oxydans (strain 621H) (Gluconobacter suboxydans) protein is Imidazole glycerol phosphate synthase subunit HisF.